A 195-amino-acid chain; its full sequence is Nucleoside triphosphate pyrophosphatase (195 aa).

Aspartate 76 (proton acceptor) is an active-site residue.

This sequence belongs to the Maf family. The cofactor is a divalent metal cation.

The protein localises to the cytoplasm. The catalysed reaction is a ribonucleoside 5'-triphosphate + H2O = a ribonucleoside 5'-phosphate + diphosphate + H(+). The enzyme catalyses a 2'-deoxyribonucleoside 5'-triphosphate + H2O = a 2'-deoxyribonucleoside 5'-phosphate + diphosphate + H(+). Its function is as follows. Nucleoside triphosphate pyrophosphatase. May have a dual role in cell division arrest and in preventing the incorporation of modified nucleotides into cellular nucleic acids. This Pelagibacter ubique (strain HTCC1062) protein is Nucleoside triphosphate pyrophosphatase.